A 1840-amino-acid chain; its full sequence is Sodium channel protein type 4 subunit alpha (1840 aa).

The Cytoplasmic segment spans residues Met-1–Ala-131. Positions Glu-36 to Ala-60 are enriched in basic and acidic residues. Residues Glu-36–Asn-63 form a disordered region. An I repeat occupies Leu-113–Asn-448. Residues Leu-132–Met-150 form a helical membrane-spanning segment. At Ser-151–Ser-157 the chain is on the extracellular side. The chain crosses the membrane as a helical span at residues Lys-158–Ala-178. Over Arg-179 to Pro-192 the chain is Cytoplasmic. Residues Trp-193 to Val-210 traverse the membrane as a helical segment. Residues Asp-211–Ser-216 are Extracellular-facing. The chain crosses the membrane as a helical span at residues Ala-217–Ile-233. The Cytoplasmic portion of the chain corresponds to Pro-234–Asp-252. Residues Val-253–Phe-272 traverse the membrane as a helical segment. The Extracellular segment spans residues Met-273–Thr-385. Cysteines 280 and 354 form a disulfide. N-linked (GlcNAc...) asparagine glycans are attached at residues Asn-288, Asn-291, Asn-297, Asn-303, Asn-309, Asn-315, Asn-327, and Asn-356. Cys-363 and Cys-369 are oxidised to a cystine. Residues Phe-386 to Leu-410 constitute an intramembrane region (pore-forming). Residues Arg-411–Tyr-417 lie on the Extracellular side of the membrane. A helical transmembrane segment spans residues Met-418–Ala-438. At Val-439–Pro-572 the chain is on the cytoplasmic side. Residues Ala-481–Ser-522 are disordered. Ser-487 is subject to Phosphoserine. Residues Cys-554–Gly-826 form an II repeat. A helical membrane pass occupies residues Phe-573–Met-591. The Extracellular portion of the chain corresponds to Glu-592 to Asn-602. The helical transmembrane segment at Val-603–Lys-622 threads the bilayer. At Leu-623–Trp-636 the chain is on the cytoplasmic side. The helical transmembrane segment at Asn-637–Val-656 threads the bilayer. The Extracellular portion of the chain corresponds to Gln-657 to Gly-658. Residues Leu-659–Ser-676 traverse the membrane as a helical segment. Residues Trp-677 to Gly-692 lie on the Cytoplasmic side of the membrane. Residues Ala-693–Val-711 form a helical membrane-spanning segment. The Extracellular segment spans residues Gly-712 to Asp-740. An intrachain disulfide couples Cys-725 to Cys-731. Residues Phe-741–Trp-761 constitute an intramembrane region (pore-forming). The Extracellular portion of the chain corresponds to Asp-762–Cys-772. A disulfide bridge connects residues Cys-763 and Cys-772. Residues Leu-773–Phe-791 traverse the membrane as a helical segment. Residues Leu-792–Trp-1025 lie on the Cytoplasmic side of the membrane. Disordered regions lie at residues Glu-854–Asn-884 and Asp-925–Pro-983. Residues Glu-868–Asn-884 are compositionally biased toward basic and acidic residues. 2 stretches are compositionally biased toward acidic residues: residues Asp-925–Pro-940 and Glu-968–Pro-983. The stretch at Arg-1006 to Leu-1319 is one III repeat. Residues Phe-1026–Phe-1043 form a helical membrane-spanning segment. The Extracellular segment spans residues Glu-1044 to Thr-1056. A helical membrane pass occupies residues Ile-1057–Leu-1075. Topologically, residues Lys-1076–Ala-1089 are cytoplasmic. A helical membrane pass occupies residues Trp-1090–Asn-1108. The Extracellular segment spans residues Trp-1109–Gly-1116. The helical transmembrane segment at Pro-1117 to Arg-1135 threads the bilayer. Residues Phe-1136–Ser-1152 lie on the Cytoplasmic side of the membrane. The helical transmembrane segment at Ile-1153 to Val-1172 threads the bilayer. Residues Asn-1173–Val-1223 lie on the Extracellular side of the membrane. Asn-1198 carries N-linked (GlcNAc...) asparagine glycosylation. The segment at residues Gly-1224–Ala-1245 is an intramembrane region (pore-forming). Residues Ala-1246–Leu-1262 are Extracellular-facing. The helical transmembrane segment at Tyr-1263–Ile-1284 threads the bilayer. The Cytoplasmic portion of the chain corresponds to Gly-1285–Val-1347. The interval Ile-1303–Met-1305 is important for rapid channel inactivation. An IV repeat occupies Ile-1328 to Gln-1626. A helical membrane pass occupies residues Phe-1348–Val-1365. Residues Glu-1366–Asp-1376 lie on the Extracellular side of the membrane. A helical transmembrane segment spans residues Ile-1377–Leu-1395. The Cytoplasmic portion of the chain corresponds to Lys-1396–Ile-1407. A helical transmembrane segment spans residues Gly-1408–Ala-1425. The Extracellular portion of the chain corresponds to Leu-1426–Thr-1438. The helical transmembrane segment at Leu-1439–Ile-1455 threads the bilayer. Topologically, residues Arg-1456–Ala-1474 are cytoplasmic. Residues Leu-1475–Phe-1492 form a helical membrane-spanning segment. Topologically, residues Gly-1493–Thr-1514 are extracellular. Residues Phe-1515–Pro-1537 constitute an intramembrane region (pore-forming). Topologically, residues Ile-1538–Gly-1567 are extracellular. Cys-1546 and Cys-1561 are oxidised to a cystine. The chain crosses the membrane as a helical span at residues Ile-1568 to Ile-1590. The Cytoplasmic portion of the chain corresponds to Leu-1591–Val-1840. The IQ domain occupies Glu-1720–His-1749. A disordered region spans residues His-1775–Val-1840. The segment covering Pro-1804–Thr-1813 has biased composition (low complexity). The span at Pro-1814–Ser-1824 shows a compositional bias: pro residues.

Belongs to the sodium channel (TC 1.A.1.10) family. Nav1.4/SCN4A subfamily. As to quaternary structure, the Nav1.4 voltage-gated sodium channel consists of an ion-conducting alpha subunit SCN4A which is functional on its own and a regulatory beta subunit SCN1B. SCN1B strongly enhances the presence of SCN4A at the cell surface. SCN1B is also required for rapid channel inactivation and recovery after inactivation. It prevents the decrease of channel activity in response to repetitive, high-frequency depolarizations. Interacts with the syntrophins SNTA1, SNTB1 and SNTB2 (via PDZ domain); probably links SCN4A to the actin cytoskeleton and the extracellular matrix via the dystrophin-associated protein complex and regulates its localization in muscle cells. Interacts with TMEM233; probable regulator of the channel. In terms of tissue distribution, detected in skeletal muscle.

The protein localises to the cell membrane. The catalysed reaction is Na(+)(in) = Na(+)(out). Potently inhibited by tetrodotoxin and saxitoxin. Inhibited by the conotoxin GVIIJ. Functionally, pore-forming subunit of Nav1.4, a voltage-gated sodium (Nav) channel that directly mediates the depolarizing phase of action potentials in excitable membranes. Navs, also called VGSCs (voltage-gated sodium channels) or VDSCs (voltage-dependent sodium channels), operate by switching between closed and open conformations depending on the voltage difference across the membrane. In the open conformation they allow Na(+) ions to selectively pass through the pore, along their electrochemical gradient. The influx of Na+ ions provokes membrane depolarization, initiating the propagation of electrical signals throughout cells and tissues. Highly expressed in skeletal muscles, Nav1.4 generates the action potential crucial for muscle contraction. In Rattus norvegicus (Rat), this protein is Sodium channel protein type 4 subunit alpha.